The primary structure comprises 716 residues: DNA ligase (716 aa).

NAD(+) is bound by residues 49–53 (DAEYD), 98–99 (SL), and E131. Catalysis depends on K133, which acts as the N6-AMP-lysine intermediate. NAD(+)-binding residues include R154, E191, K308, and K332. Zn(2+) contacts are provided by C437, C439, C461, and C467. The 79-residue stretch at 638–716 (KRHSPIATKT…EDEWLQLIAE (79 aa)) folds into the BRCT domain.

Belongs to the NAD-dependent DNA ligase family. LigA subfamily. Mg(2+) serves as cofactor. Requires Mn(2+) as cofactor.

The catalysed reaction is NAD(+) + (deoxyribonucleotide)n-3'-hydroxyl + 5'-phospho-(deoxyribonucleotide)m = (deoxyribonucleotide)n+m + AMP + beta-nicotinamide D-nucleotide.. DNA ligase that catalyzes the formation of phosphodiester linkages between 5'-phosphoryl and 3'-hydroxyl groups in double-stranded DNA using NAD as a coenzyme and as the energy source for the reaction. It is essential for DNA replication and repair of damaged DNA. The chain is DNA ligase from Bradyrhizobium sp. (strain BTAi1 / ATCC BAA-1182).